Reading from the N-terminus, the 268-residue chain is Nitrite transporter NirC (268 aa).

The Cytoplasmic portion of the chain corresponds to 1–25; it reads MFTDTINKCAANAARIARLSANNPL. Residues 26–46 traverse the membrane as a helical segment; sequence GFWVSSAMAGAYVGLGIILIF. The Periplasmic segment spans residues 47–59; it reads TLGNLLDPSVRPL. Residues 60-80 form a helical membrane-spanning segment; it reads VMGATFGIALTLVIIAGSELF. Topologically, residues 81–112 are cytoplasmic; the sequence is TGHTMFLTFGVKAGSISHGQMWAILPQTWLGN. The helical transmembrane segment at 113-133 threads the bilayer; it reads LVGSVFVAMLYSWGGGSLLPV. At 134 to 151 the chain is on the periplasmic side; the sequence is DTSIVHSVALAKTTAPAM. A helical transmembrane segment spans residues 152 to 172; the sequence is VLFFKGALCNWLVCLAIWMAL. The Cytoplasmic segment spans residues 173–179; sequence RTEGAAK. The chain crosses the membrane as a helical span at residues 180–200; the sequence is FIAIWWCLLAFIASGYEHSIA. The Periplasmic portion of the chain corresponds to 201 to 225; sequence NMTLFALSWFGNHSEAYTLAGIGHN. Residues 226–246 traverse the membrane as a helical segment; it reads LLWVTLGNTLSGAVFMGLGYW. Over 247–268 the chain is Cytoplasmic; that stretch reads YATPKANRPVADKFNQTETAAG.

The protein belongs to the FNT transporter (TC 1.A.16) family.

Its subcellular location is the cell inner membrane. Catalyzes nitrite uptake and nitrite export across the cytoplasmic membrane. Is up to 10-fold more active than NarK or NarU in nitrite uptake for subsequent reduction in the cytoplasm by the NirB/NirD nitrite reductase. The protein is Nitrite transporter NirC (nirC) of Escherichia coli (strain K12).